We begin with the raw amino-acid sequence, 459 residues long: ATP synthase subunit beta (459 aa).

Residue 148–155 coordinates ATP; the sequence is GGAGVGKT.

This sequence belongs to the ATPase alpha/beta chains family. As to quaternary structure, F-type ATPases have 2 components, CF(1) - the catalytic core - and CF(0) - the membrane proton channel. CF(1) has five subunits: alpha(3), beta(3), gamma(1), delta(1), epsilon(1). CF(0) has three main subunits: a(1), b(2) and c(9-12). The alpha and beta chains form an alternating ring which encloses part of the gamma chain. CF(1) is attached to CF(0) by a central stalk formed by the gamma and epsilon chains, while a peripheral stalk is formed by the delta and b chains.

It localises to the cell inner membrane. It catalyses the reaction ATP + H2O + 4 H(+)(in) = ADP + phosphate + 5 H(+)(out). Produces ATP from ADP in the presence of a proton gradient across the membrane. The catalytic sites are hosted primarily by the beta subunits. This Cellvibrio japonicus (strain Ueda107) (Pseudomonas fluorescens subsp. cellulosa) protein is ATP synthase subunit beta.